The primary structure comprises 119 residues: Large ribosomal subunit protein uL18 (119 aa).

It belongs to the universal ribosomal protein uL18 family. Part of the 50S ribosomal subunit; part of the 5S rRNA/L5/L18/L25 subcomplex. Contacts the 5S and 23S rRNAs.

Its function is as follows. This is one of the proteins that bind and probably mediate the attachment of the 5S RNA into the large ribosomal subunit, where it forms part of the central protuberance. This chain is Large ribosomal subunit protein uL18, found in Clostridium botulinum (strain 657 / Type Ba4).